We begin with the raw amino-acid sequence, 1009 residues long: Translation initiation factor IF-2 (1009 aa).

The tract at residues 1 to 415 (MSDENENGRP…EREKEKRRGG (415 aa)) is disordered. Positions 94–110 (EELRARQRVVDAAREAQ) are enriched in basic and acidic residues. The segment covering 111–121 (ARQVAEQAAAE) has biased composition (low complexity). The segment covering 122–136 (ARARAAQEAAQREAA) has biased composition (basic and acidic residues). The span at 137–146 (AKAAAERAAA) shows a compositional bias: low complexity. Positions 147–174 (APPPVAQAPAAPAPAAPVTPPPAAPQAP) are enriched in pro residues. Positions 175–189 (RPVAQAPVAPSAPRQ) are enriched in low complexity. Basic and acidic residues-rich tracts occupy residues 208–218 (EPSRDRRDDRP) and 251–287 (PRPE…RPQG). Residues 311–320 (GGPPRGPRPG) show a composition bias toward pro residues. Composition is skewed to basic and acidic residues over residues 346-358 (MDRR…DRRK) and 403-415 (RARE…RRGG). One can recognise a tr-type G domain in the interval 505–675 (LRPPVVTIMG…LLQAEVLDLK (171 aa)). Residues 514 to 521 (GHVDHGKT) are G1. 514 to 521 (GHVDHGKT) lines the GTP pocket. The interval 539–543 (GITQH) is G2. The tract at residues 561–564 (DTPG) is G3. GTP contacts are provided by residues 561-565 (DTPGH) and 615-618 (NKMD). The tract at residues 615 to 618 (NKMD) is G4. The tract at residues 651-653 (SAK) is G5.

Belongs to the TRAFAC class translation factor GTPase superfamily. Classic translation factor GTPase family. IF-2 subfamily.

The protein localises to the cytoplasm. In terms of biological role, one of the essential components for the initiation of protein synthesis. Protects formylmethionyl-tRNA from spontaneous hydrolysis and promotes its binding to the 30S ribosomal subunits. Also involved in the hydrolysis of GTP during the formation of the 70S ribosomal complex. The sequence is that of Translation initiation factor IF-2 from Caulobacter vibrioides (strain ATCC 19089 / CIP 103742 / CB 15) (Caulobacter crescentus).